Consider the following 1403-residue polypeptide: MSSKPPSNTPKFSYARALASSQSNKSNSTKASENNTATAEKQAVKPSGVEPTNTSRANAQKKTESTGKITSEADTEKYNSSKSPVNKEGSVEKKSSEKSSTNNKPWRGDNTSKPSANSSAERTSSQHQKPETSSQIGKDNAAPVENVNEKSTSQETAPPVSTVPIQFGSITRNAAIPSKPKVSGNMQNKSGVSSYSSKSQSVNSSVTSNPPHTEEPVAAKPEASSTATKGPRPTTSASNTNTSPANGAPTNKPSTDINTTDPATQTTQVSASNSPALSGSSTPSNTSSRSNRQNHGNFSEKRHYDRYGNSHPSYNKYSHYQHGFNYNNSGNNRNESGHPRFRNSRRNYNNQGAYPTYMSNGRSANQSPRNNPQNVNNGSTPIQIPVSLQTPYGQVYGQPQYIVDPNMVQYGPILQPGYVPQYYPVYHQTPYTQNFPNMSRSGSQVSDQVVESPNSSTLSPRNGFAPIVKQQKKSSALKIVNPVTHTEVVVPQKNASSPNPSETNSRAETPTAAPPQISEEEASQRKDAIKLAIQQRIQEKAEAEAKRKAEEKARLEAEENAKREAEEQAKREAEEKAKREAEEKAKREAEEKAKREAEENAKREAEEKAKREAEEKAKREAEEKAKREAEEKAKREAEEKAKREAEEKAKREAEEKAKREAEENAKREAEEKAKREAEENAKREAEEKVKRETEENAKRKAEEEGKREADKNPEIKSSAPLASSEANVDTSKQTNATEPEVVDKTKVEKLKASEGKSTSSLSSPSHSTSSKRDLLSGLESLSLKTNPKSEQCLESLLNSQFITDFSALVYPSTIKPPSTEEALKAGKYEYDVPFLLQFQSVYTDKPMKGWDERMKETVASAFSDKSSRGMYSSSRQSSRSGSNTHSHAGPGFGGPSERKGISRLGIDRGFSSSGAGFGSGSNYKSAPSRGVSHHGHGGMSGSHRGSQRGSRRGGGERDKPDPSSLTIPVDQVAPLQLSANRWQPKKLTEKPAETKGEDEEALLPPEVVQRKVKGSLNKMTLEKFDKISDQILEIAMQSRKENDGRTLKQVIQLTFEKATDEPNFSNMYARFARKMMDSIDDSIRDEGVLDKNNQPVRGGLLFRKYLLSRCQEDFERGWKANLPSGKAGEAEIMSDEYYVAAAIKRRGLGLVRFIGELFKLSMLSEKIMHECIKRLLGNVTDPEEEEIESLCRLLMTVGVNIDATEKGHAAMDVYVLRMETITKIPNLPSRIKFMLMDVMDSRKNGWAVKNEVEKGPKTIAEIHEEAERKKALAESQRPSSGRMHGRDMNRGDSRMGGRGSNPPFSSSDWSNNKDGYARLGQGIRGLKSGTQGSHGPTSLSSMLKGGSVSRTPSRQNSALRREQSVRAPPSNVAVTSANSFELLEEHDHDNDGGQKDSNSKTSS.

Composition is skewed to polar residues over residues 1-11 (MSSKPPSNTPK), 19-39 (ASSQ…TATA), and 50-60 (EPTNTSRANAQ). Disordered stretches follow at residues 1-381 (MSSK…GSTP), 439-464 (SRSG…RNGF), 488-774 (VVVP…KRDL), and 861-1003 (AFSD…EALL). A Phosphoserine modification is found at serine 83. Positions 109 to 137 (DNTSKPSANSSAERTSSQHQKPETSSQIG) are enriched in polar residues. 2 stretches are compositionally biased toward low complexity: residues 190-208 (SGVS…SVTS) and 231-248 (PRPT…ANGA). The segment covering 249-269 (PTNKPSTDINTTDPATQTTQV) has biased composition (polar residues). Low complexity predominate over residues 270-291 (SASNSPALSGSSTPSNTSSRSN). Residues 298-308 (FSEKRHYDRYG) are compositionally biased toward basic and acidic residues. A compositionally biased stretch (low complexity) spans 325–334 (NYNNSGNNRN). Polar residues-rich tracts occupy residues 346 to 381 (RNYN…GSTP), 439 to 460 (SRSG…TLSP), and 493 to 508 (KNAS…SRAE). A phosphoserine mark is found at serine 452, serine 455, serine 456, and serine 459. The segment covering 537 to 714 (IQEKAEAEAK…GKREADKNPE (178 aa)) has biased composition (basic and acidic residues). Residues 720-737 (PLASSEANVDTSKQTNAT) show a composition bias toward polar residues. The segment covering 741 to 754 (VVDKTKVEKLKASE) has biased composition (basic and acidic residues). Positions 757–768 (STSSLSSPSHST) are enriched in low complexity. A phosphoserine mark is found at serine 866 and serine 882. The segment covering 868 to 886 (RGMYSSSRQSSRSGSNTHS) has biased composition (low complexity). Phosphothreonine is present on threonine 884. Phosphoserine is present on residues serine 886, serine 911, serine 919, and serine 921. At tyrosine 923 the chain carries Phosphotyrosine. The segment covering 986–995 (KLTEKPAETK) has biased composition (basic and acidic residues). Positions 1009-1245 (QRKVKGSLNK…MDVMDSRKNG (237 aa)) constitute an MIF4G domain. A disordered region spans residues 1266-1403 (AERKKALAES…QKDSNSKTSS (138 aa)). Over residues 1284-1295 (HGRDMNRGDSRM) the composition is skewed to basic and acidic residues. 3 stretches are compositionally biased toward polar residues: residues 1302 to 1313 (PPFSSSDWSNNK), 1328 to 1341 (SGTQ…SLSS), and 1348 to 1358 (VSRTPSRQNSA). Residue serine 1333 is modified to Phosphoserine. Residues 1383–1403 (LEEHDHDNDGGQKDSNSKTSS) are compositionally biased toward basic and acidic residues.

This sequence belongs to the eukaryotic initiation factor 4G family.

Its subcellular location is the cytoplasm. It is found in the perinuclear region. In terms of biological role, component of the protein complex eIF4F, which is involved in the recognition of the mRNA cap, ATP-dependent unwinding of 5'-terminal secondary structure and recruitment of mRNA to the ribosome. The protein is Eukaryotic translation initiation factor 4 gamma (tif471) of Schizosaccharomyces pombe (strain 972 / ATCC 24843) (Fission yeast).